We begin with the raw amino-acid sequence, 1206 residues long: DNA-directed RNA polymerase subunit beta' (1206 aa).

Zn(2+)-binding residues include cysteine 60, cysteine 62, cysteine 75, and cysteine 78. 3 residues coordinate Mg(2+): aspartate 449, aspartate 451, and aspartate 453. Zn(2+) contacts are provided by cysteine 822, cysteine 896, cysteine 903, and cysteine 906.

Belongs to the RNA polymerase beta' chain family. The RNAP catalytic core consists of 2 alpha, 1 beta, 1 beta' and 1 omega subunit. When a sigma factor is associated with the core the holoenzyme is formed, which can initiate transcription. Mg(2+) is required as a cofactor. Zn(2+) serves as cofactor.

The catalysed reaction is RNA(n) + a ribonucleoside 5'-triphosphate = RNA(n+1) + diphosphate. DNA-dependent RNA polymerase catalyzes the transcription of DNA into RNA using the four ribonucleoside triphosphates as substrates. This is DNA-directed RNA polymerase subunit beta' from Staphylococcus haemolyticus (strain JCSC1435).